The primary structure comprises 226 residues: Transmembrane emp24 domain-containing protein 5 (226 aa).

The N-terminal stretch at 1-24 (MGDKTWLPFPVVLLAALLLPRAAG) is a signal peptide. Topologically, residues 25–193 (FTPSLDSDFT…IQESNFDRVN (169 aa)) are lumenal. One can recognise a GOLD domain in the interval 42–123 (KECFYQPMPL…EKVIFFELIL (82 aa)). Residues 194–214 (FWSMVNLVVMVVVSAIQVYML) traverse the membrane as a helical segment. Residues 215–226 (KSLFEDKRKSRT) lie on the Cytoplasmic side of the membrane. The Mediates export from ER motif lies at 217-218 (LF).

This sequence belongs to the EMP24/GP25L family. As to quaternary structure, interacts with TMED9 and TMED10.

Its subcellular location is the endoplasmic reticulum membrane. The protein resides in the golgi apparatus. It is found in the cis-Golgi network membrane. The protein localises to the endoplasmic reticulum-Golgi intermediate compartment membrane. Potential role in vesicular protein trafficking, mainly in the early secretory pathway. Required for the maintenance of the Golgi apparatus; involved in protein exchange between Golgi stacks during assembly. Probably not required for COPI-vesicle-mediated retrograde transport. The sequence is that of Transmembrane emp24 domain-containing protein 5 (TMED5) from Bos taurus (Bovine).